Reading from the N-terminus, the 116-residue chain is Large ribosomal subunit protein bL20c (116 aa).

Belongs to the bacterial ribosomal protein bL20 family.

The protein resides in the plastid. Its subcellular location is the chloroplast. Binds directly to 23S ribosomal RNA and is necessary for the in vitro assembly process of the 50S ribosomal subunit. It is not involved in the protein synthesizing functions of that subunit. This is Large ribosomal subunit protein bL20c from Cyanidioschyzon merolae (strain NIES-3377 / 10D) (Unicellular red alga).